We begin with the raw amino-acid sequence, 492 residues long: Serine/threonine protein phosphatase 2A 57 kDa regulatory subunit B' theta isoform (492 aa).

The tract at residues 1 to 63 (MWKQILSKLP…GFKEGNLKGN (63 aa)) is disordered. Residues 16-39 (KNHSSSSSSTSKSSDNGASKSGNS) are compositionally biased toward low complexity. The short motif at 490–492 (SSL) is the Microbody targeting signal element.

This sequence belongs to the phosphatase 2A regulatory subunit B56 family. PP2A consists of a common heteromeric enzyme, composed of a catalytic subunit (subunits C), a constant regulatory subunit (subunit A), and a variety of regulatory subunits such as subunits B (the R2/B/PR55/B55, R3/B''/PR72/PR130/PR59 and R5/B'/B56 families). Interacts with BZR1. Interacts with PP2A2, PP2A5 and PP2AA2. Highly expressed in dry seeds. Expressed in roots, cotyledons, rosette leaves and flowers.

The protein resides in the cytoplasm. It is found in the cytosol. The protein localises to the peroxisome. In terms of biological role, the B regulatory subunit may modulate substrate selectivity and catalytic activity, and may also direct the localization of the catalytic enzyme to a particular subcellular compartment. Associates with the serine/threonine-protein phosphatase PP2A catalytic subunit C and regulatory subunit A to positively regulates beta-oxidation of fatty acids and protoauxins in peroxisomes by dephosphorylating peroxisomal beta-oxidation-related proteins. Required for the formation of the PP2A holoenzyme that negatively regulates brassinosteroid signaling by dephosphorylating and inactivating BRI1 in the cytoplasm. This chain is Serine/threonine protein phosphatase 2A 57 kDa regulatory subunit B' theta isoform (B'THETA), found in Arabidopsis thaliana (Mouse-ear cress).